The primary structure comprises 907 residues: Phosphoenolpyruvate carboxylase (907 aa).

Residues His138 and Lys570 contribute to the active site.

It belongs to the PEPCase type 1 family. Mg(2+) is required as a cofactor.

It carries out the reaction oxaloacetate + phosphate = phosphoenolpyruvate + hydrogencarbonate. Functionally, forms oxaloacetate, a four-carbon dicarboxylic acid source for the tricarboxylic acid cycle. This is Phosphoenolpyruvate carboxylase from Streptococcus mutans serotype c (strain ATCC 700610 / UA159).